Consider the following 474-residue polypeptide: Pyoverdine export outer membrane protein OpmQ (474 aa).

Residues 1–17 form the signal peptide; the sequence is MSMKNLSLISACLLLGA. Cysteine 18 carries N-palmitoyl cysteine lipidation. The S-diacylglycerol cysteine moiety is linked to residue cysteine 18.

It belongs to the outer membrane factor (OMF) (TC 1.B.17) family. As to quaternary structure, part of the tripartite efflux system PvdRT-OpmQ, which is composed of an inner membrane component with both ATPase and permease domains, PvdT, a periplasmic membrane fusion protein, PvdR, and an outer membrane component, OpmQ.

The protein localises to the cell outer membrane. In terms of biological role, part of the tripartite efflux system PvdRT-OpmQ required for the secretion into the extracellular milieu of the siderophore pyoverdine (PVD), which is involved in iron acquisition. The system is responsible for export of newly synthesized PVD after the final steps of biosynthesis have taken place in the periplasm. It is also responsible for recycling of PVD after internalization of ferri-PVD into the periplasm by the outer-membrane receptor FpvA and release of iron from PVD, thus making PVD available for new cycles of iron uptake. In addition, can expel unwanted metals complexed with PVD from the periplasm into the extracellular medium. The chain is Pyoverdine export outer membrane protein OpmQ from Pseudomonas aeruginosa (strain ATCC 15692 / DSM 22644 / CIP 104116 / JCM 14847 / LMG 12228 / 1C / PRS 101 / PAO1).